A 292-amino-acid polypeptide reads, in one-letter code: NADH-cytochrome b5 reductase 1 (292 aa).

Residues 12-32 traverse the membrane as a helical segment; it reads ALLVVGTAIFAVLVGAKFLGG. An FAD-binding FR-type domain is found at 43 to 148; sequence TEFQNFVLKE…RGPKGAMVYT (106 aa). Residues 128–143 and 154–191 each bind FAD; these read TTLK…GPKG and HIGM…QVDL.

This sequence belongs to the flavoprotein pyridine nucleotide cytochrome reductase family. In terms of assembly, monomer. Component of the 2-(3-amino-3-carboxypropyl)histidine synthase complex composed of dph1, dph2, dph3 and a NADH-dependent reductase, predominantly cbr1. Requires FAD as cofactor.

Its subcellular location is the mitochondrion outer membrane. It catalyses the reaction 2 Fe(III)-[cytochrome b5] + NADH = 2 Fe(II)-[cytochrome b5] + NAD(+) + H(+). It carries out the reaction 2 Fe(3+)-[Dph3] + NADH = 2 Fe(2+)-[Dph3] + NAD(+) + H(+). It participates in protein modification; peptidyl-diphthamide biosynthesis. NADH-dependent reductase for dph3 and cytochrome b5. Required for the first step of diphthamide biosynthesis, a post-translational modification of histidine which occurs in elongation factor 2. Dph1 and dph2 transfer a 3-amino-3-carboxypropyl (ACP) group from S-adenosyl-L-methionine (SAM) to a histidine residue, the reaction is assisted by a reduction system comprising dph3 and a NADH-dependent reductase, predominantly cbr1. By reducing dph3, also involved in the formation of the tRNA wobble base modification mcm5s 2U (5-methoxycarbonylmethyl-2-thiouridine), mediated by the elongator complex. The cytochrome b5/NADH cytochrome b5 reductase electron transfer system supports the catalytic activity of several sterol biosynthetic enzymes. The polypeptide is NADH-cytochrome b5 reductase 1 (cbr1) (Aspergillus oryzae (strain ATCC 42149 / RIB 40) (Yellow koji mold)).